The chain runs to 601 residues: Aspartate--tRNA(Asp/Asn) ligase (601 aa).

Glu-173 is a binding site for L-aspartate. Residues 197-200 (QLFK) form an aspartate region. L-aspartate is bound at residue Arg-219. ATP is bound by residues 219–221 (RDE) and Gln-228. His-456 lines the L-aspartate pocket. An ATP-binding site is contributed by Glu-490. Arg-497 contributes to the L-aspartate binding site. 542-545 (GWDR) lines the ATP pocket. The tract at residues 566–601 (GGGYDPLTQAPAPITAEQRRESGVDAVPDDETAPQA) is disordered. Over residues 592-601 (VPDDETAPQA) the composition is skewed to acidic residues.

This sequence belongs to the class-II aminoacyl-tRNA synthetase family. Type 1 subfamily. In terms of assembly, homodimer.

Its subcellular location is the cytoplasm. It catalyses the reaction tRNA(Asx) + L-aspartate + ATP = L-aspartyl-tRNA(Asx) + AMP + diphosphate. In terms of biological role, aspartyl-tRNA synthetase with relaxed tRNA specificity since it is able to aspartylate not only its cognate tRNA(Asp) but also tRNA(Asn). Reaction proceeds in two steps: L-aspartate is first activated by ATP to form Asp-AMP and then transferred to the acceptor end of tRNA(Asp/Asn). The chain is Aspartate--tRNA(Asp/Asn) ligase from Beutenbergia cavernae (strain ATCC BAA-8 / DSM 12333 / CCUG 43141 / JCM 11478 / NBRC 16432 / NCIMB 13614 / HKI 0122).